A 124-amino-acid chain; its full sequence is Fluoride-specific ion channel FluC (124 aa).

4 consecutive transmembrane segments (helical) span residues 1-21 (MIAL…LRFA), 37-57 (GTLA…GLFL), 69-89 (GLIV…LDTV), and 99-119 (LALG…WAGL). Na(+)-binding residues include G76 and T79.

It belongs to the fluoride channel Fluc/FEX (TC 1.A.43) family.

It localises to the cell inner membrane. It carries out the reaction fluoride(in) = fluoride(out). With respect to regulation, na(+) is not transported, but it plays an essential structural role and its presence is essential for fluoride channel function. Its function is as follows. Fluoride-specific ion channel. Important for reducing fluoride concentration in the cell, thus reducing its toxicity. This is Fluoride-specific ion channel FluC from Pseudomonas putida (strain ATCC 700007 / DSM 6899 / JCM 31910 / BCRC 17059 / LMG 24140 / F1).